We begin with the raw amino-acid sequence, 391 residues long: D-alanine--D-alanine ligase (391 aa).

Residues 1 to 24 are disordered; the sequence is MSSENLPQSPERAESPQAPRRKPR. One can recognise an ATP-grasp domain in the interval 171 to 381; that stretch reads KRVFLSFGLP…YPELVDRLIQ (211 aa). ATP is bound at residue 207–262; that stretch reads AGEHGWPLFIKPARGGSSMGITKVDSVEGLDAAIEEARRHDPKFLVESLLRGREIE. Mg(2+) is bound by residues Asp335, Glu348, and Asn350.

This sequence belongs to the D-alanine--D-alanine ligase family. The cofactor is Mg(2+). Mn(2+) serves as cofactor.

Its subcellular location is the cytoplasm. It catalyses the reaction 2 D-alanine + ATP = D-alanyl-D-alanine + ADP + phosphate + H(+). The protein operates within cell wall biogenesis; peptidoglycan biosynthesis. Functionally, cell wall formation. This Streptomyces griseus subsp. griseus (strain JCM 4626 / CBS 651.72 / NBRC 13350 / KCC S-0626 / ISP 5235) protein is D-alanine--D-alanine ligase.